Consider the following 447-residue polypeptide: Putative metabolite transport protein HI_0418 (447 aa).

Topologically, residues 1–28 (MCKPQQKHYGRQVMNTQNSLKQVATATM) are cytoplasmic. A helical membrane pass occupies residues 29 to 49 (VGTAIEYFDNYIYAMAAVLVF). Residues 50–63 (NHQFFHAVDPLSGQ) are Periplasmic-facing. The helical transmembrane segment at 64–84 (IAALSTLALTFIARPLGAILF) threads the bilayer. The Cytoplasmic portion of the chain corresponds to 85-96 (GHFGDRFGRKNT). Residues 97 to 117 (FVMSLLLMGISTVVIGLLPTY) form a helical membrane-spanning segment. Topologically, residues 118–119 (DS) are periplasmic. A helical membrane pass occupies residues 120 to 140 (IGIWATILLCLCRIGQGIGLG). Residues 141-167 (GEWGGAALVAVENAPEGKRGWYGTFPQ) lie on the Cytoplasmic side of the membrane. A helical membrane pass occupies residues 168 to 188 (LGAPLGLLLANGVFLGITAIF). Residues 189–194 (GQEAMT) lie on the Periplasmic side of the membrane. A helical membrane pass occupies residues 195 to 215 (EWAWRIPFLSSVILVAIGLYV). Topologically, residues 216–249 (RLKLTEAPIFLAALNKPKPKRLPMLEVVTTHFKP) are cytoplasmic. Residues 250–270 (FFLGMLVCIAGYVLFYIMIAF) traverse the membrane as a helical segment. Residues 271 to 295 (SQIYAKSAPTVSEAGYAMGLGFSPQ) are Periplasmic-facing. The chain crosses the membrane as a helical span at residues 296-316 (IFTALLMASAVSLAITIAASG). The Cytoplasmic portion of the chain corresponds to 317–325 (KYIDKIGRR). The helical transmembrane segment at 326–346 (TWLIWTTVGVAIFGLSLPLFL) threads the bilayer. Topologically, residues 347–354 (ENGTTTSL) are periplasmic. The helical transmembrane segment at 355–375 (FWFLFIGMGLIGMGYGPLASF) threads the bilayer. Over 376–390 (LPELFPTHARYSGAS) the chain is Cytoplasmic. The helical transmembrane segment at 391-411 (LTYNIAGLFGASVAAIIALPL) threads the bilayer. Over 412–418 (NAHYGLK) the chain is Periplasmic. The chain crosses the membrane as a helical span at residues 419-439 (GVGIYLTLNAVLSLVGLWFIS). The Cytoplasmic portion of the chain corresponds to 440 to 447 (ETKDKLLS).

The protein belongs to the major facilitator superfamily. Metabolite:H+ Symporter (MHS) family (TC 2.A.1.6) family.

Its subcellular location is the cell inner membrane. The chain is Putative metabolite transport protein HI_0418 from Haemophilus influenzae (strain ATCC 51907 / DSM 11121 / KW20 / Rd).